The sequence spans 499 residues: Glycerol kinase (499 aa).

T13 contacts ADP. ATP contacts are provided by T13, T14, and S15. T13 contacts sn-glycerol 3-phosphate. R17 provides a ligand contact to ADP. The sn-glycerol 3-phosphate site is built by R83, E84, Y135, and D245. 5 residues coordinate glycerol: R83, E84, Y135, D245, and Q246. 2 residues coordinate ADP: T267 and G310. ATP contacts are provided by T267, G310, Q314, and G411. Positions 411 and 415 each coordinate ADP.

It belongs to the FGGY kinase family.

The enzyme catalyses glycerol + ATP = sn-glycerol 3-phosphate + ADP + H(+). It functions in the pathway polyol metabolism; glycerol degradation via glycerol kinase pathway; sn-glycerol 3-phosphate from glycerol: step 1/1. With respect to regulation, inhibited by fructose 1,6-bisphosphate (FBP). In terms of biological role, key enzyme in the regulation of glycerol uptake and metabolism. Catalyzes the phosphorylation of glycerol to yield sn-glycerol 3-phosphate. The sequence is that of Glycerol kinase from Xanthomonas euvesicatoria pv. vesicatoria (strain 85-10) (Xanthomonas campestris pv. vesicatoria).